The sequence spans 514 residues: Na(+)/H(+) antiporter NhaB (514 aa).

Helical transmembrane passes span 23–43 (LALL…PFIA), 63–83 (PLLP…TSAA), 97–117 (LLLM…LFIF), 120–140 (LLLS…AAAF), 144–164 (FLDA…FYGI), 202–222 (LMMH…VGEP), 238–258 (FFLR…LTCM), 303–323 (AIIG…VGLI), 357–377 (LTVF…APII), 391–411 (LFYL…VGTI), 447–467 (ATPN…APLI), and 475–495 (VWMA…CVEF).

Belongs to the NhaB Na(+)/H(+) (TC 2.A.34) antiporter family.

The protein localises to the cell inner membrane. It carries out the reaction 2 Na(+)(in) + 3 H(+)(out) = 2 Na(+)(out) + 3 H(+)(in). In terms of biological role, na(+)/H(+) antiporter that extrudes sodium in exchange for external protons. The polypeptide is Na(+)/H(+) antiporter NhaB (Salmonella paratyphi B (strain ATCC BAA-1250 / SPB7)).